The following is a 154-amino-acid chain: Protein aau3 (154 aa).

One can recognise an HTH rrf2-type domain in the interval 2–132; sequence RLTKQTNYAV…QGYTIDDLVK (131 aa). Residues cysteine 91, cysteine 99, and cysteine 105 each contribute to the [2Fe-2S] cluster site.

Requires [2Fe-2S] cluster as cofactor.

Required for growth utilizing PHB cycle intermediates. The sequence is that of Protein aau3 (aau3) from Rhizobium meliloti (strain 1021) (Ensifer meliloti).